We begin with the raw amino-acid sequence, 253 residues long: MRILLSNDDGVHAPGIQTLAKALREFADVQVVAPDRNRSGASNSLTLESSLRTFTFENGDIAVQMGTPTDCVYLGVNALMRPRPDIVVSGINAGPNLGDDVIYSGTVAAAMEGRHFGFPALAVSLDGHNHYDTAAAVTCSILRALCEEPLRTGRILNINVPDLPLDQIKGIRVTRCGTRHPADQVIPQQDPRGNTLYWIGPPGGKCDAGPGTDFAAVDEGYVSITPLRVDLTAHSAQDVVSDWLNSVGVGTQW.

A divalent metal cation is bound by residues Asp8, Asp9, Ser39, and Asn92.

The protein belongs to the SurE nucleotidase family. A divalent metal cation serves as cofactor.

Its subcellular location is the cytoplasm. The enzyme catalyses a ribonucleoside 5'-phosphate + H2O = a ribonucleoside + phosphate. It catalyses the reaction a ribonucleoside 3'-phosphate + H2O = a ribonucleoside + phosphate. The catalysed reaction is [phosphate](n) + H2O = [phosphate](n-1) + phosphate + H(+). Functionally, nucleotidase with a broad substrate specificity as it can dephosphorylate various ribo- and deoxyribonucleoside 5'-monophosphates and ribonucleoside 3'-monophosphates with highest affinity to 3'-AMP. Also hydrolyzes polyphosphate (exopolyphosphatase activity) with the preference for short-chain-length substrates (P20-25). Might be involved in the regulation of dNTP and NTP pools, and in the turnover of 3'-mononucleotides produced by numerous intracellular RNases (T1, T2, and F) during the degradation of various RNAs. In Shigella dysenteriae serotype 1 (strain Sd197), this protein is 5'/3'-nucleotidase SurE.